The primary structure comprises 101 residues: Enhancer of yellow 2 transcription factor (101 aa).

Belongs to the ENY2 family. Component of the nuclear pore complex (NPC)-associated AMEX complex (anchoring and mRNA export complex), composed of at least e(y)2 and xmas-2. Component of the SAGA transcription coactivator-HAT complexes, at least composed of Ada2b, e(y)2, Pcaf/Gcn5, Taf10 and Nipped-A/Trrap. Within the SAGA complex, e(y)2, Sgf11, and not/nonstop form an additional subcomplex of SAGA called the DUB module (deubiquitination module). Component of the THO complex, composed of at least e(y)2, HPR1, THO2, THOC5, THOC6 and THOC7. Interacts with e(y)1. Interacts with su(Hw) (via zinc fingers). Interacts with xmas-2; required for localization to the nuclear periphery. Interacts with the nuclear pore complex (NPC).

Its subcellular location is the nucleus. The protein resides in the nucleoplasm. It localises to the cytoplasm. Involved in mRNA export coupled transcription activation by association with both the AMEX and the SAGA complexes. The SAGA complex is a multiprotein complex that activates transcription by remodeling chromatin and mediating histone acetylation and deubiquitination. Within the SAGA complex, participates in a subcomplex that specifically deubiquitinates histone H2B. The SAGA complex is recruited to specific gene promoters by activators, where it is required for transcription. Required for nuclear receptor-mediated transactivation. Involved in transcription elongation by recruiting the THO complex onto nascent mRNA. The AMEX complex functions in docking export-competent ribonucleoprotein particles (mRNPs) to the nuclear entrance of the nuclear pore complex (nuclear basket). AMEX participates in mRNA export and accurate chromatin positioning in the nucleus by tethering genes to the nuclear periphery. The protein is Enhancer of yellow 2 transcription factor of Drosophila yakuba (Fruit fly).